Here is a 222-residue protein sequence, read N- to C-terminus: Sugar fermentation stimulation protein homolog (222 aa).

Belongs to the SfsA family.

The polypeptide is Sugar fermentation stimulation protein homolog (Thermoplasma acidophilum (strain ATCC 25905 / DSM 1728 / JCM 9062 / NBRC 15155 / AMRC-C165)).